A 139-amino-acid polypeptide reads, in one-letter code: S-adenosylmethionine decarboxylase proenzyme (139 aa).

Residue Ser63 is the Schiff-base intermediate with substrate; via pyruvic acid of the active site. Pyruvic acid (Ser); by autocatalysis is present on Ser63. Residue His68 is the Proton acceptor; for processing activity of the active site. The Proton donor; for catalytic activity role is filled by Cys83.

This sequence belongs to the prokaryotic AdoMetDC family. Type 1 subfamily. In terms of assembly, heterotetramer of two alpha and two beta chains arranged as a dimer of alpha/beta heterodimers. Pyruvate is required as a cofactor. In terms of processing, is synthesized initially as an inactive proenzyme. Formation of the active enzyme involves a self-maturation process in which the active site pyruvoyl group is generated from an internal serine residue via an autocatalytic post-translational modification. Two non-identical subunits are generated from the proenzyme in this reaction, and the pyruvate is formed at the N-terminus of the alpha chain, which is derived from the carboxyl end of the proenzyme. The post-translation cleavage follows an unusual pathway, termed non-hydrolytic serinolysis, in which the side chain hydroxyl group of the serine supplies its oxygen atom to form the C-terminus of the beta chain, while the remainder of the serine residue undergoes an oxidative deamination to produce ammonia and the pyruvoyl group blocking the N-terminus of the alpha chain.

The catalysed reaction is S-adenosyl-L-methionine + H(+) = S-adenosyl 3-(methylsulfanyl)propylamine + CO2. It functions in the pathway amine and polyamine biosynthesis; S-adenosylmethioninamine biosynthesis; S-adenosylmethioninamine from S-adenosyl-L-methionine: step 1/1. Its function is as follows. Catalyzes the decarboxylation of S-adenosylmethionine to S-adenosylmethioninamine (dcAdoMet), the propylamine donor required for the synthesis of the polyamines spermine and spermidine from the diamine putrescine. The chain is S-adenosylmethionine decarboxylase proenzyme from Pyrococcus furiosus (strain ATCC 43587 / DSM 3638 / JCM 8422 / Vc1).